The following is a 542-amino-acid chain: uncharacterized protein (542 aa).

A compositionally biased stretch (low complexity) spans 125–138 (ANSNSSSTGRDSTP). 4 disordered regions span residues 125-182 (ANSN…NHHN), 194-333 (LPPT…CSSS), 390-428 (SSST…YSSI), and 459-487 (SSSS…PSCN). Polar residues predominate over residues 202–213 (QKPSFLSNSNQI). Composition is skewed to low complexity over residues 228 to 306 (SYTS…NSNN), 314 to 333 (NKLS…CSSS), 390 to 423 (SSST…TSTN), and 459 to 479 (SSSS…GGNS).

This is an uncharacterized protein from Dictyostelium discoideum (Social amoeba).